The following is a 968-amino-acid chain: Alanine--tRNA ligase, cytoplasmic (968 aa).

The residue at position 1 (Met1) is an N-acetylmethionine. Residue Ser3 is modified to Phosphoserine. An N6-acetyllysine modification is found at Lys19. Residues Arg77, His95, Trp176, and 214-216 (IWN) each bind ATP. L-alanine-binding residues include Asn216 and Asp239. Gly243 serves as a coordination point for ATP. A phosphoserine mark is found at Ser399 and Ser555. His605, His609, Cys723, and His727 together coordinate Zn(2+). The Nuclear localization signal motif lies at 750 to 763 (RRIVAVTGAEAQKA). An N6-acetyllysine modification is found at Lys876. Lys943 is modified (N6,N6,N6-trimethyllysine; alternate). The residue at position 943 (Lys943) is an N6,N6-dimethyllysine; alternate. Lys943 is subject to N6-methyllysine; alternate.

Belongs to the class-II aminoacyl-tRNA synthetase family. As to quaternary structure, monomer. Interacts with ANKRD16; the interaction is direct. Zn(2+) is required as a cofactor. Post-translationally, ISGylated. In terms of processing, methylation at 'Lys-943' by METTL21C.

The protein localises to the cytoplasm. The protein resides in the nucleus. The catalysed reaction is tRNA(Ala) + L-alanine + ATP = L-alanyl-tRNA(Ala) + AMP + diphosphate. It carries out the reaction (S)-lactate + ATP + H(+) = (S)-lactoyl-AMP + diphosphate. The enzyme catalyses (S)-lactoyl-AMP + L-lysyl-[protein] = N(6)-[(S)-lactoyl]-L-lysyl-[protein] + AMP + 2 H(+). The protein lactyltransferase activity is inhibited by beta-alanine. Functionally, catalyzes the attachment of alanine to tRNA(Ala) in a two-step reaction: alanine is first activated by ATP to form Ala-AMP and then transferred to the acceptor end of tRNA(Ala). Also edits incorrectly charged tRNA(Ala) via its editing domain. In presence of high levels of lactate, also acts as a protein lactyltransferase that mediates lactylation of lysine residues in target proteins, such as TEAD1, TP53/p53 and YAP1. Protein lactylation takes place in a two-step reaction: lactate is first activated by ATP to form lactate-AMP and then transferred to lysine residues of target proteins. Acts as an inhibitor of TP53/p53 activity by catalyzing lactylation of TP53/p53. Acts as a positive regulator of the Hippo pathway by mediating lactylation of TEAD1 and YAP1. This Rattus norvegicus (Rat) protein is Alanine--tRNA ligase, cytoplasmic (Aars1).